The sequence spans 349 residues: Isopentenyl-diphosphate delta-isomerase (349 aa).

6–7 (RK) provides a ligand contact to substrate. FMN-binding positions include 62–64 (AMT), serine 93, and asparagine 122. Glutamine 152 is a binding site for substrate. A Mg(2+)-binding site is contributed by glutamate 153. Residues lysine 184, threonine 214, 258-259 (GG), and 280-281 (AG) contribute to the FMN site.

It belongs to the IPP isomerase type 2 family. In terms of assembly, homooctamer. Dimer of tetramers. FMN is required as a cofactor. NADPH serves as cofactor. The cofactor is Mg(2+).

It localises to the cytoplasm. It carries out the reaction isopentenyl diphosphate = dimethylallyl diphosphate. In terms of biological role, involved in the biosynthesis of isoprenoids. Catalyzes the 1,3-allylic rearrangement of the homoallylic substrate isopentenyl (IPP) to its allylic isomer, dimethylallyl diphosphate (DMAPP). The chain is Isopentenyl-diphosphate delta-isomerase from Bacillus cytotoxicus (strain DSM 22905 / CIP 110041 / 391-98 / NVH 391-98).